The chain runs to 736 residues: Phosphoribosylformylglycinamidine synthase subunit PurL (736 aa).

Histidine 50 is a catalytic residue. 2 residues coordinate ATP: tyrosine 53 and lysine 92. Glutamate 94 contacts Mg(2+). Substrate-binding positions include 95–98 and arginine 117; that span reads SHNH. The active-site Proton acceptor is histidine 96. Aspartate 118 provides a ligand contact to Mg(2+). Glutamine 241 contacts substrate. Position 269 (aspartate 269) interacts with Mg(2+). Residue 313-315 coordinates substrate; that stretch reads ESQ. Residues aspartate 495 and glycine 532 each coordinate ATP. Residue asparagine 533 coordinates Mg(2+). A substrate-binding site is contributed by serine 535.

Belongs to the FGAMS family. As to quaternary structure, monomer. Part of the FGAM synthase complex composed of 1 PurL, 1 PurQ and 2 PurS subunits.

It localises to the cytoplasm. It catalyses the reaction N(2)-formyl-N(1)-(5-phospho-beta-D-ribosyl)glycinamide + L-glutamine + ATP + H2O = 2-formamido-N(1)-(5-O-phospho-beta-D-ribosyl)acetamidine + L-glutamate + ADP + phosphate + H(+). It participates in purine metabolism; IMP biosynthesis via de novo pathway; 5-amino-1-(5-phospho-D-ribosyl)imidazole from N(2)-formyl-N(1)-(5-phospho-D-ribosyl)glycinamide: step 1/2. Part of the phosphoribosylformylglycinamidine synthase complex involved in the purines biosynthetic pathway. Catalyzes the ATP-dependent conversion of formylglycinamide ribonucleotide (FGAR) and glutamine to yield formylglycinamidine ribonucleotide (FGAM) and glutamate. The FGAM synthase complex is composed of three subunits. PurQ produces an ammonia molecule by converting glutamine to glutamate. PurL transfers the ammonia molecule to FGAR to form FGAM in an ATP-dependent manner. PurS interacts with PurQ and PurL and is thought to assist in the transfer of the ammonia molecule from PurQ to PurL. The chain is Phosphoribosylformylglycinamidine synthase subunit PurL from Bartonella quintana (strain Toulouse) (Rochalimaea quintana).